A 491-amino-acid polypeptide reads, in one-letter code: MSRSTCKVLYVSGEISPFIRVSALADFMASFPHAMEEEGCEARIMMPKYGVINDRKFRLHDVLRLSDIEVRSKEKTDLLHVKVTALPSSKIQTYFLYNEKYFKRNALFADMQQGSDVKNSLERVVFFNLGVLETLQRLGWKPDIIHCQDWYAGLVPLLLKTMYADCEFFKDIRTVLTVHNAYRQGIYPLKGFKKMLPSEVIDKMHVEDDTVNMLFTAVEHFDAVTTTSDAYAGMLADGRSEAFGLDRVIEKRASGLVGIANGLDAKQWNPAADKMIKKKFDIERLSEKTENKKYLLEEFGMELEEATPLVGSVINAERFQGSELLMESIDGLMELDIQLVVSVSGDKELIRRLQEKAKAYPEKLAVYSEFSDAIFHQIMASSDLLLIPAEVESCGMMQLFAIAYGSVPVVYTAGGNIETIEEIAGDKNGSAFVFHEYSVESLLATFEDALHTYADGERWERIVTGNMVRDLTWKNSAAKYNELYQGVRGGE.

Residue Arg20 coordinates ADP-alpha-D-glucose.

This sequence belongs to the glycosyltransferase 1 family. Bacterial/plant glycogen synthase subfamily.

It catalyses the reaction [(1-&gt;4)-alpha-D-glucosyl](n) + ADP-alpha-D-glucose = [(1-&gt;4)-alpha-D-glucosyl](n+1) + ADP + H(+). Its pathway is glycan biosynthesis; glycogen biosynthesis. Synthesizes alpha-1,4-glucan chains using ADP-glucose. The polypeptide is Glycogen synthase (Prosthecochloris aestuarii (strain DSM 271 / SK 413)).